A 771-amino-acid polypeptide reads, in one-letter code: U3 small nucleolar RNA-associated protein 14 homolog A (771 aa).

The tract at residues 23 to 49 (PKDYLLSESEDEGDNDGERKHQKLLEA) is disordered. Phosphoserine occurs at positions 29, 31, 52, 77, and 81. Residues 40–67 (ERKHQKLLEAISSLDGKNRRKLAERSEA) adopt a coiled-coil conformation. K122 participates in a covalent cross-link: Glycyl lysine isopeptide (Lys-Gly) (interchain with G-Cter in SUMO2). Position 205 is a phosphothreonine (T205). Coiled-coil stretches lie at residues 216 to 290 (SLEE…EKAR) and 317 to 347 (LEAR…EEEE). 2 disordered regions span residues 334–355 (TQKL…DVEE) and 367–557 (MNAD…KKEQ). Residues 342–355 (ESEEEEGGTEDVEE) show a composition bias toward acidic residues. Residues 399-436 (LEAHGVSESEGEERPVAEEEILLREFEERRSLRKRSEL) are compositionally biased toward basic and acidic residues. 2 positions are modified to phosphoserine: S405 and S407. R433 is subject to Citrulline. Residues S437 and S445 each carry the phosphoserine modification. A Glycyl lysine isopeptide (Lys-Gly) (interchain with G-Cter in SUMO2) cross-link involves residue K449. At S453 the chain carries Phosphoserine. Positions 504-529 (RPERVQTLEELEELGKEECFQNKELP) are enriched in basic and acidic residues. K519 is covalently cross-linked (Glycyl lysine isopeptide (Lys-Gly) (interchain with G-Cter in SUMO2)). Residues 535-544 (GQQSERTPNN) are compositionally biased toward polar residues. The span at 547–557 (DAPKEKKKKEQ) shows a compositional bias: basic and acidic residues. Phosphoserine is present on S569. The residue at position 589 (R589) is a Citrulline. K733 is covalently cross-linked (Glycyl lysine isopeptide (Lys-Gly) (interchain with G-Cter in SUMO2)). A compositionally biased stretch (polar residues) spans 740 to 751 (RSSSRSDLSVIQ). Positions 740-771 (RSSSRSDLSVIQRNPKRITTRHKKQLKKCSVD) are disordered. A compositionally biased stretch (basic residues) spans 753–771 (NPKRITTRHKKQLKKCSVD).

This sequence belongs to the UTP14 family. As to quaternary structure, interacts with DHX37. In terms of processing, citrullinated by PADI4. Ubiquitously expressed.

It localises to the nucleus. The protein localises to the nucleolus. Functionally, may be required for ribosome biogenesis. This chain is U3 small nucleolar RNA-associated protein 14 homolog A (UTP14A), found in Homo sapiens (Human).